The sequence spans 470 residues: Tubulin gamma chain (470 aa).

A GTP-binding site is contributed by 144 to 150 (AGGTGSG).

Belongs to the tubulin family.

It localises to the cytoplasm. The protein resides in the cytoskeleton. Its subcellular location is the microtubule organizing center. The protein localises to the spindle pole body. Functionally, tubulin is the major constituent of microtubules. The gamma chain is found at microtubule organizing centers (MTOC) such as the spindle poles or the centrosome, suggesting that it is involved in the minus-end nucleation of microtubule assembly. The protein is Tubulin gamma chain (TUB4) of Eremothecium gossypii (strain ATCC 10895 / CBS 109.51 / FGSC 9923 / NRRL Y-1056) (Yeast).